The chain runs to 267 residues: Enolase-phosphatase E1 (267 aa).

D11 and E13 together coordinate Mg(2+). Residues 155–156 and K189 contribute to the substrate site; that span reads SS. D215 serves as a coordination point for Mg(2+).

It belongs to the HAD-like hydrolase superfamily. MasA/MtnC family. Monomer. Mg(2+) serves as cofactor.

The protein localises to the cytoplasm. Its subcellular location is the nucleus. The catalysed reaction is 5-methylsulfanyl-2,3-dioxopentyl phosphate + H2O = 1,2-dihydroxy-5-(methylsulfanyl)pent-1-en-3-one + phosphate. It functions in the pathway amino-acid biosynthesis; L-methionine biosynthesis via salvage pathway; L-methionine from S-methyl-5-thio-alpha-D-ribose 1-phosphate: step 3/6. The protein operates within amino-acid biosynthesis; L-methionine biosynthesis via salvage pathway; L-methionine from S-methyl-5-thio-alpha-D-ribose 1-phosphate: step 4/6. Its function is as follows. Bifunctional enzyme that catalyzes the enolization of 2,3-diketo-5-methylthiopentyl-1-phosphate (DK-MTP-1-P) into the intermediate 2-hydroxy-3-keto-5-methylthiopentenyl-1-phosphate (HK-MTPenyl-1-P), which is then dephosphorylated to form the acireductone 1,2-dihydroxy-3-keto-5-methylthiopentene (DHK-MTPene). The chain is Enolase-phosphatase E1 (enoph1) from Dictyostelium discoideum (Social amoeba).